A 497-amino-acid chain; its full sequence is Bifunctional protein GlmU (497 aa).

The tract at residues 1 to 243 is pyrophosphorylase; it reads MTSSTTSSTD…SALVAGVNDR (243 aa). UDP-N-acetyl-alpha-D-glucosamine-binding positions include 16 to 19, Lys-30, Gln-87, and 92 to 93; these read LAAG and GT. A Mg(2+)-binding site is contributed by Asp-118. Residues Gly-153, Glu-168, Asn-183, and Asn-241 each coordinate UDP-N-acetyl-alpha-D-glucosamine. Asn-241 contacts Mg(2+). Positions 244-264 are linker; it reads VQLAALGAELNRRIVTAHQRA. The N-acetyltransferase stretch occupies residues 265 to 497; it reads GVTVIDPGST…LGHHDDSQGS (233 aa). Arg-346 and Lys-364 together coordinate UDP-N-acetyl-alpha-D-glucosamine. His-376 serves as the catalytic Proton acceptor. Positions 379 and 390 each coordinate UDP-N-acetyl-alpha-D-glucosamine. Residues Ala-393, 399 to 400, Ser-418, and Ala-436 each bind acetyl-CoA; that span reads NY. Residues 473 to 497 form a disordered region; the sequence is ARAAERASGEAAEQALGHHDDSQGS. Over residues 488–497 the composition is skewed to basic and acidic residues; it reads LGHHDDSQGS.

The protein in the N-terminal section; belongs to the N-acetylglucosamine-1-phosphate uridyltransferase family. This sequence in the C-terminal section; belongs to the transferase hexapeptide repeat family. In terms of assembly, homotrimer. Mg(2+) is required as a cofactor.

The protein resides in the cytoplasm. It carries out the reaction alpha-D-glucosamine 1-phosphate + acetyl-CoA = N-acetyl-alpha-D-glucosamine 1-phosphate + CoA + H(+). It catalyses the reaction N-acetyl-alpha-D-glucosamine 1-phosphate + UTP + H(+) = UDP-N-acetyl-alpha-D-glucosamine + diphosphate. Its pathway is nucleotide-sugar biosynthesis; UDP-N-acetyl-alpha-D-glucosamine biosynthesis; N-acetyl-alpha-D-glucosamine 1-phosphate from alpha-D-glucosamine 6-phosphate (route II): step 2/2. It functions in the pathway nucleotide-sugar biosynthesis; UDP-N-acetyl-alpha-D-glucosamine biosynthesis; UDP-N-acetyl-alpha-D-glucosamine from N-acetyl-alpha-D-glucosamine 1-phosphate: step 1/1. The protein operates within bacterial outer membrane biogenesis; LPS lipid A biosynthesis. In terms of biological role, catalyzes the last two sequential reactions in the de novo biosynthetic pathway for UDP-N-acetylglucosamine (UDP-GlcNAc). The C-terminal domain catalyzes the transfer of acetyl group from acetyl coenzyme A to glucosamine-1-phosphate (GlcN-1-P) to produce N-acetylglucosamine-1-phosphate (GlcNAc-1-P), which is converted into UDP-GlcNAc by the transfer of uridine 5-monophosphate (from uridine 5-triphosphate), a reaction catalyzed by the N-terminal domain. The sequence is that of Bifunctional protein GlmU from Mycobacterium sp. (strain JLS).